A 467-amino-acid polypeptide reads, in one-letter code: Protein indeterminate-domain 6, chloroplastic (467 aa).

The N-terminal 20 residues, 1-20, are a transit peptide targeting the chloroplast; sequence MSSSYNTIALSSTPTFLLSS. Positions 38-65 are disordered; that stretch reads TMVQQQPTSSVAPPPKKRRNQPGNPNPD. Positions 39–48 are enriched in polar residues; it reads MVQQQPTSSV. At S72 the chain carries Phosphoserine. 2 consecutive C2H2-type zinc fingers follow at residues 82 to 104 and 123 to 153; these read FLCE…RRGH and YLCP…YRKH. The C2H2-type 2; degenerate zinc-finger motif lies at 158 to 181; the sequence is WKCDKCSKRYAVQSDWKAHSKTCG. 8 residues coordinate Zn(2+): C160, C163, H176, C180, C187, C189, H202, and C206. A CCHC-type 2; atypical zinc finger spans residues 185 to 208; it reads YRCDCGTIFSRRDSYITHRAFCDA. Residues 195-207 are SHR-binding; it reads RRDSYITHRAFCD. The segment at 440–467 is disordered; it reads NGRGGRSGGPPLDAEMKFSHPNHPYGKA.

Its subcellular location is the plastid. The protein resides in the chloroplast. Probable transcription factor. This chain is Protein indeterminate-domain 6, chloroplastic, found in Arabidopsis thaliana (Mouse-ear cress).